Reading from the N-terminus, the 439-residue chain is Probable non-inhibitory serpin-Z9 (439 aa).

The disordered stretch occupies residues Arg-12–Pro-44. Over residues Ala-31–Pro-44 the composition is skewed to pro residues. Residues Gly-389–Pro-413 are RCL.

This sequence belongs to the serpin family.

The sequence is that of Probable non-inhibitory serpin-Z9 from Oryza sativa subsp. japonica (Rice).